Reading from the N-terminus, the 354-residue chain is Holliday junction branch migration complex subunit RuvB (354 aa).

A compositionally biased stretch (polar residues) spans 1-10 (MAIKRNQGSN). Positions 1–36 (MAIKRNQGSNPKPEKKERLTKAETHQEQDNLEESIR) are disordered. The segment covering 12-36 (KPEKKERLTKAETHQEQDNLEESIR) has biased composition (basic and acidic residues). A large ATPase domain (RuvB-L) region spans residues 13 to 196 (PEKKERLTKA…FGLIQRLKFY (184 aa)). ATP is bound by residues isoleucine 35, arginine 36, glycine 77, lysine 80, threonine 81, threonine 82, 143–145 (EDY), arginine 186, tyrosine 196, and arginine 233. Threonine 81 is a Mg(2+) binding site. The segment at 197–267 (EPEELALIIK…LAAEALDIYQ (71 aa)) is small ATPAse domain (RuvB-S). The interval 270-354 (PQGLDWTDRL…EEQLSIFSEQ (85 aa)) is head domain (RuvB-H). Arginine 325 and arginine 330 together coordinate DNA.

It belongs to the RuvB family. As to quaternary structure, homohexamer. Forms an RuvA(8)-RuvB(12)-Holliday junction (HJ) complex. HJ DNA is sandwiched between 2 RuvA tetramers; dsDNA enters through RuvA and exits via RuvB. An RuvB hexamer assembles on each DNA strand where it exits the tetramer. Each RuvB hexamer is contacted by two RuvA subunits (via domain III) on 2 adjacent RuvB subunits; this complex drives branch migration. In the full resolvosome a probable DNA-RuvA(4)-RuvB(12)-RuvC(2) complex forms which resolves the HJ.

It is found in the cytoplasm. The enzyme catalyses ATP + H2O = ADP + phosphate + H(+). Functionally, the RuvA-RuvB-RuvC complex processes Holliday junction (HJ) DNA during genetic recombination and DNA repair, while the RuvA-RuvB complex plays an important role in the rescue of blocked DNA replication forks via replication fork reversal (RFR). RuvA specifically binds to HJ cruciform DNA, conferring on it an open structure. The RuvB hexamer acts as an ATP-dependent pump, pulling dsDNA into and through the RuvAB complex. RuvB forms 2 homohexamers on either side of HJ DNA bound by 1 or 2 RuvA tetramers; 4 subunits per hexamer contact DNA at a time. Coordinated motions by a converter formed by DNA-disengaged RuvB subunits stimulates ATP hydrolysis and nucleotide exchange. Immobilization of the converter enables RuvB to convert the ATP-contained energy into a lever motion, pulling 2 nucleotides of DNA out of the RuvA tetramer per ATP hydrolyzed, thus driving DNA branch migration. The RuvB motors rotate together with the DNA substrate, which together with the progressing nucleotide cycle form the mechanistic basis for DNA recombination by continuous HJ branch migration. Branch migration allows RuvC to scan DNA until it finds its consensus sequence, where it cleaves and resolves cruciform DNA. The polypeptide is Holliday junction branch migration complex subunit RuvB (Crocosphaera subtropica (strain ATCC 51142 / BH68) (Cyanothece sp. (strain ATCC 51142))).